An 845-amino-acid chain; its full sequence is Protein P (845 aa).

Residues 1–179 (MPLSYQHFRK…FCGSPYSWEQ (179 aa)) are terminal protein domain (TP). Residues 180–348 (ELHHGRSVTK…YCLSHLVNLL (169 aa)) are spacer. Disordered stretches follow at residues 186–205 (SVTK…QPSG), 222–245 (QPRL…SGSI), and 288–318 (YSHL…RSQS). The span at 289 to 301 (SHLSTSKRQSSSG) shows a compositional bias: polar residues. The segment at 349–692 (EDWGPCADHG…YMNLYPVARQ (344 aa)) is polymerase/reverse transcriptase domain (RT). The Reverse transcriptase domain maps to 359–602 (EHHIRIPRTP…YSLNFMGYII (244 aa)). Residues Asp431, Asp553, and Asp554 each contribute to the Mg(2+) site.

It belongs to the hepadnaviridae P protein family.

It carries out the reaction DNA(n) + a 2'-deoxyribonucleoside 5'-triphosphate = DNA(n+1) + diphosphate. It catalyses the reaction Endonucleolytic cleavage to 5'-phosphomonoester.. Activated by host HSP70 and HSP40 in vitro to be able to bind the epsilon loop of the pgRNA. Because deletion of the RNase H region renders the protein partly chaperone-independent, the chaperones may be needed indirectly to relieve occlusion of the RNA-binding site by this domain. Inhibited by several reverse-transcriptase inhibitors: Lamivudine, Adefovir and Entecavir. Multifunctional enzyme that converts the viral RNA genome into dsDNA in viral cytoplasmic capsids. This enzyme displays a DNA polymerase activity that can copy either DNA or RNA templates, and a ribonuclease H (RNase H) activity that cleaves the RNA strand of RNA-DNA heteroduplexes in a partially processive 3'- to 5'-endonucleasic mode. Neo-synthesized pregenomic RNA (pgRNA) are encapsidated together with the P protein, and reverse-transcribed inside the nucleocapsid. Initiation of reverse-transcription occurs first by binding the epsilon loop on the pgRNA genome, and is initiated by protein priming, thereby the 5'-end of (-)DNA is covalently linked to P protein. Partial (+)DNA is synthesized from the (-)DNA template and generates the relaxed circular DNA (RC-DNA) genome. After budding and infection, the RC-DNA migrates in the nucleus, and is converted into a plasmid-like covalently closed circular DNA (cccDNA). The activity of P protein does not seem to be necessary for cccDNA generation, and is presumably released from (+)DNA by host nuclear DNA repair machinery. The protein is Protein P of Hepatitis B virus genotype A3 (isolate Cameroon/CMR711/1994) (HBV-A).